The following is a 242-amino-acid chain: U1 small nuclear ribonucleoprotein C (242 aa).

The segment at 3-35 adopts a Matrin-type; degenerate zinc-finger fold; the sequence is YLGDYCDVYLTHDSMSVRKAHNSGRNHLRNVVE. Residues 60–242 form a disordered region; it reads GQASSNPMLQ…SSPGPSQEGK (183 aa). 4 stretches are compositionally biased toward pro residues: residues 90–107, 136–149, 156–183, and 201–213; these read MLPP…PGAP, PPMP…PLPN, PFPP…PPIP, and PVPP…PGAP. Residues 231 to 242 are compositionally biased toward polar residues; it reads PASSPGPSQEGK.

Belongs to the U1 small nuclear ribonucleoprotein C family. U1 snRNP is composed of the 7 core Sm proteins B/B', D1, D2, D3, E, F and G that assemble in a heptameric protein ring on the Sm site of the small nuclear RNA to form the core snRNP, and at least 3 U1 snRNP-specific proteins U1-70K, U1-A and U1-C. U1-C interacts with U1 snRNA and the 5' splice-site region of the pre-mRNA.

It is found in the nucleus. Functionally, component of the spliceosomal U1 snRNP, which is essential for recognition of the pre-mRNA 5' splice-site and the subsequent assembly of the spliceosome. U1-C is directly involved in initial 5' splice-site recognition for both constitutive and regulated alternative splicing. The interaction with the 5' splice-site seems to precede base-pairing between the pre-mRNA and the U1 snRNA. Stimulates commitment or early (E) complex formation by stabilizing the base pairing of the 5' end of the U1 snRNA and the 5' splice-site region. In Ajellomyces capsulatus (strain G186AR / H82 / ATCC MYA-2454 / RMSCC 2432) (Darling's disease fungus), this protein is U1 small nuclear ribonucleoprotein C.